The primary structure comprises 152 residues: Nucleoside diphosphate kinase (152 aa).

Positions 12, 60, 88, 94, 105, and 115 each coordinate ATP. Residue His118 is the Pros-phosphohistidine intermediate of the active site.

It belongs to the NDK family. As to quaternary structure, homotrimer. The cofactor is Mg(2+).

It carries out the reaction a 2'-deoxyribonucleoside 5'-diphosphate + ATP = a 2'-deoxyribonucleoside 5'-triphosphate + ADP. The enzyme catalyses a ribonucleoside 5'-diphosphate + ATP = a ribonucleoside 5'-triphosphate + ADP. Functionally, major role in the synthesis of nucleoside triphosphates other than ATP. The ATP gamma phosphate is transferred to the NDP beta phosphate via a ping-pong mechanism, using a phosphorylated active-site intermediate. In Neurospora crassa (strain ATCC 24698 / 74-OR23-1A / CBS 708.71 / DSM 1257 / FGSC 987), this protein is Nucleoside diphosphate kinase (ndk-1).